A 298-amino-acid polypeptide reads, in one-letter code: Ethanolamine ammonia-lyase small subunit (298 aa).

V210, E231, and C261 together coordinate adenosylcob(III)alamin.

Belongs to the EutC family. In terms of assembly, the basic unit is a heterodimer which dimerizes to form tetramers. The heterotetramers trimerize; 6 large subunits form a core ring with 6 small subunits projecting outwards. The cofactor is adenosylcob(III)alamin.

The protein localises to the bacterial microcompartment. The catalysed reaction is ethanolamine = acetaldehyde + NH4(+). It functions in the pathway amine and polyamine degradation; ethanolamine degradation. Catalyzes the deamination of various vicinal amino-alcohols to oxo compounds. Allows this organism to utilize ethanolamine as the sole source of nitrogen and carbon in the presence of external vitamin B12. This chain is Ethanolamine ammonia-lyase small subunit, found in Salmonella heidelberg (strain SL476).